A 314-amino-acid polypeptide reads, in one-letter code: tRNA pseudouridine synthase B (314 aa).

A substrate-binding site is contributed by histidine 43. Catalysis depends on aspartate 48, which acts as the Nucleophile. Substrate-binding residues include tyrosine 76, tyrosine 179, and leucine 200.

It belongs to the pseudouridine synthase TruB family. Type 1 subfamily.

The enzyme catalyses uridine(55) in tRNA = pseudouridine(55) in tRNA. In terms of biological role, responsible for synthesis of pseudouridine from uracil-55 in the psi GC loop of transfer RNAs. This Shigella flexneri protein is tRNA pseudouridine synthase B.